Here is a 258-residue protein sequence, read N- to C-terminus: Ditrans,polycis-undecaprenyl-diphosphate synthase ((2E,6E)-farnesyl-diphosphate specific) (258 aa).

Residue aspartate 24 is part of the active site. Aspartate 24 is a Mg(2+) binding site. Substrate contacts are provided by residues 25-28, tryptophan 29, arginine 37, histidine 41, and 69-71; these read GNGR and SSE. The active-site Proton acceptor is asparagine 72. Residues tryptophan 73, arginine 75, arginine 192, and 198–200 each bind substrate; that span reads RIS. Glutamate 211 serves as a coordination point for Mg(2+).

The protein belongs to the UPP synthase family. Homodimer. Mg(2+) is required as a cofactor.

The catalysed reaction is 8 isopentenyl diphosphate + (2E,6E)-farnesyl diphosphate = di-trans,octa-cis-undecaprenyl diphosphate + 8 diphosphate. Catalyzes the sequential condensation of isopentenyl diphosphate (IPP) with (2E,6E)-farnesyl diphosphate (E,E-FPP) to yield (2Z,6Z,10Z,14Z,18Z,22Z,26Z,30Z,34E,38E)-undecaprenyl diphosphate (di-trans,octa-cis-UPP). UPP is the precursor of glycosyl carrier lipid in the biosynthesis of bacterial cell wall polysaccharide components such as peptidoglycan and lipopolysaccharide. The protein is Ditrans,polycis-undecaprenyl-diphosphate synthase ((2E,6E)-farnesyl-diphosphate specific) of Xanthomonas oryzae pv. oryzae (strain KACC10331 / KXO85).